A 68-amino-acid chain; its full sequence is Metallothionein-3 (68 aa).

N-acetylmethionine is present on M1. Residues 1–30 form a beta region; the sequence is MDPETCPCPTGGSCTCSDPCKCEGCTCASS. Positions 6, 8, 14, 16, 20, 22, 25, and 27 each coordinate a divalent metal cation. The alpha stretch occupies residues 31 to 68; that stretch reads KKSCCSCCPAECEKCAKDCVCKGGEGAEAEEKKCSCCQ. S33 carries the post-translational modification Phosphoserine. C34, C35, C37, C38, C42, C45, C49, C51, C64, C66, and C67 together coordinate a divalent metal cation.

This sequence belongs to the metallothionein superfamily. Type 1 family.

In terms of biological role, binds heavy metals. Contains five zinc and one copper atoms per polypeptide chain and only a negligible amount of cadmium. This Bos mutus grunniens (Wild yak) protein is Metallothionein-3 (MT3).